A 280-amino-acid polypeptide reads, in one-letter code: Transmembrane protein 119 (280 aa).

Residues 1-20 form the signal peptide; it reads MVPWFLLSLLLLARPVPGVA. Over 21-91 the chain is Extracellular; that stretch reads YSVSLPASFL…IMDFFRQYVM (71 aa). O-linked (Xyl...) (chondroitin sulfate) serine glycosylation occurs at S36. Over residues 38–47 the composition is skewed to low complexity; the sequence is EAEGSSASSP. The disordered stretch occupies residues 38-73; that stretch reads EAEGSSASSPSLPPPGTPAFSPTPERPQPTALDGPV. A helical membrane pass occupies residues 92 to 112; it reads LIAVVGSLTFLIMFIVCAALI. The Cytoplasmic segment spans residues 113-280; it reads TRQKHKATAY…CACNRVSPSV (168 aa). 2 disordered regions span residues 133-162 and 181-280; these read VDQRDRAGGPRTFSEVPDRAPDSRHEEGLD and PARA…SPSV. A compositionally biased stretch (basic and acidic residues) spans 148–162; it reads VPDRAPDSRHEEGLD. A Phosphoserine modification is found at S269.

In terms of assembly, interacts with SMAD1, SMAD5 and RUNX2. As to expression, expressed in spermatocytes and spermatids in the developing testis (at protein level). Expressed in the brain, heart, lung, spleen, skeletal muscle, ovary, testis and epididymis. Predominantly expressed in osteoblasts.

The protein localises to the cell membrane. It is found in the cytoplasm. It localises to the endoplasmic reticulum membrane. Its subcellular location is the secreted. Plays an important role in bone formation and normal bone mineralization. Promotes the differentiation of myoblasts into osteoblasts. May induce the commitment and differentiation of myoblasts into osteoblasts through an enhancement of BMP2 production and interaction with the BMP-RUNX2 pathway. Up-regulates the expression of ATF4 which plays a central role in osteoblast differentiation. Essential for normal spermatogenesis and late testicular differentiation. The sequence is that of Transmembrane protein 119 (Tmem119) from Mus musculus (Mouse).